Here is a 228-residue protein sequence, read N- to C-terminus: Demethylmenaquinone methyltransferase (228 aa).

S-adenosyl-L-methionine-binding positions include threonine 62, aspartate 80, aspartate 100–alanine 101, and serine 117.

This sequence belongs to the class I-like SAM-binding methyltransferase superfamily. MenG/UbiE family.

The enzyme catalyses a 2-demethylmenaquinol + S-adenosyl-L-methionine = a menaquinol + S-adenosyl-L-homocysteine + H(+). It participates in quinol/quinone metabolism; menaquinone biosynthesis; menaquinol from 1,4-dihydroxy-2-naphthoate: step 2/2. In terms of biological role, methyltransferase required for the conversion of demethylmenaquinol (DMKH2) to menaquinol (MKH2). The polypeptide is Demethylmenaquinone methyltransferase (Mycolicibacterium vanbaalenii (strain DSM 7251 / JCM 13017 / BCRC 16820 / KCTC 9966 / NRRL B-24157 / PYR-1) (Mycobacterium vanbaalenii)).